A 37-amino-acid chain; its full sequence is NADH dehydrogenase [ubiquinone] 1 alpha subcomplex subunit 5 (37 aa).

It belongs to the complex I NDUFA5 subunit family. As to quaternary structure, complex I is composed of about 45 different subunits.

Its subcellular location is the mitochondrion inner membrane. Accessory subunit of the mitochondrial membrane respiratory chain NADH dehydrogenase (Complex I), that is believed not to be involved in catalysis. Complex I functions in the transfer of electrons from NADH to the respiratory chain. The immediate electron acceptor for the enzyme is believed to be ubiquinone. The sequence is that of NADH dehydrogenase [ubiquinone] 1 alpha subcomplex subunit 5 from Solanum tuberosum (Potato).